The primary structure comprises 501 residues: Arabinose import ATP-binding protein AraG (501 aa).

ABC transporter domains follow at residues 4-239 (LEFN…MVGR) and 252-495 (LGDN…LPDK). 36–43 (GENGAGKS) provides a ligand contact to ATP.

This sequence belongs to the ABC transporter superfamily. Arabinose importer (TC 3.A.1.2.2) family. As to quaternary structure, the complex is composed of two ATP-binding proteins (AraG), two transmembrane proteins (AraH) and a solute-binding protein (AraF).

The protein localises to the cell inner membrane. The catalysed reaction is L-arabinose(out) + ATP + H2O = L-arabinose(in) + ADP + phosphate + H(+). Functionally, part of the ABC transporter complex AraFGH involved in arabinose import. Responsible for energy coupling to the transport system. The polypeptide is Arabinose import ATP-binding protein AraG (Rhizobium etli (strain ATCC 51251 / DSM 11541 / JCM 21823 / NBRC 15573 / CFN 42)).